The chain runs to 1116 residues: Protein STICHEL-like 1 (1116 aa).

2 disordered regions span residues arginine 95–threonine 138 and lysine 225–proline 244. Acidic residues predominate over residues asparagine 115 to valine 124. 2 consecutive short sequence motifs (PEST) follow at residues arginine 257–arginine 282 and lysine 402–glutamine 422. Glycine 463–threonine 470 is an ATP binding site. 4 residues coordinate Zn(2+): cysteine 482, cysteine 492, cysteine 495, and cysteine 498. Residues glutamate 726–threonine 760 adopt a coiled-coil conformation. The segment at proline 777–serine 798 is disordered. The segment covering serine 778 to arginine 793 has biased composition (polar residues).

The protein belongs to the DnaX/STICHEL family.

The chain is Protein STICHEL-like 1 from Arabidopsis thaliana (Mouse-ear cress).